Reading from the N-terminus, the 314-residue chain is Probable 5-dehydro-4-deoxyglucarate dehydratase (314 aa).

Belongs to the DapA family.

The catalysed reaction is 5-dehydro-4-deoxy-D-glucarate + H(+) = 2,5-dioxopentanoate + CO2 + H2O. It functions in the pathway carbohydrate acid metabolism; D-glucarate degradation; 2,5-dioxopentanoate from D-glucarate: step 2/2. The protein is Probable 5-dehydro-4-deoxyglucarate dehydratase of Bradyrhizobium sp. (strain ORS 278).